A 361-amino-acid polypeptide reads, in one-letter code: Inactive 2'-5'-oligoadenylate synthase 1D (361 aa).

This sequence belongs to the 2-5A synthase family. Interacts with OAS1A, the interaction inhibits OAS1A catalytic activity. In terms of tissue distribution, expressed specifically in oocytes (at protein level). Expressed at highest level in ovary with lesser amounts in intestine, brain, thymus lung, kidney, liver and uterus.

It localises to the cytoplasm. Functionally, does not have 2'-5'-oligoadenylate synthetase activity, but can bind double-stranded RNA. May play a role in the control of female fertility, possibly by binding to and inhibiting OAS1A. The protein is Inactive 2'-5'-oligoadenylate synthase 1D of Mus musculus (Mouse).